We begin with the raw amino-acid sequence, 236 residues long: Biosynthetic peptidoglycan transglycosylase (236 aa).

The helical transmembrane segment at 20-40 threads the bilayer; sequence GLVVAAVLALIPTMLTFLYLP.

It belongs to the glycosyltransferase 51 family.

It is found in the cell inner membrane. It carries out the reaction [GlcNAc-(1-&gt;4)-Mur2Ac(oyl-L-Ala-gamma-D-Glu-L-Lys-D-Ala-D-Ala)](n)-di-trans,octa-cis-undecaprenyl diphosphate + beta-D-GlcNAc-(1-&gt;4)-Mur2Ac(oyl-L-Ala-gamma-D-Glu-L-Lys-D-Ala-D-Ala)-di-trans,octa-cis-undecaprenyl diphosphate = [GlcNAc-(1-&gt;4)-Mur2Ac(oyl-L-Ala-gamma-D-Glu-L-Lys-D-Ala-D-Ala)](n+1)-di-trans,octa-cis-undecaprenyl diphosphate + di-trans,octa-cis-undecaprenyl diphosphate + H(+). Its pathway is cell wall biogenesis; peptidoglycan biosynthesis. In terms of biological role, peptidoglycan polymerase that catalyzes glycan chain elongation from lipid-linked precursors. The chain is Biosynthetic peptidoglycan transglycosylase from Mesorhizobium japonicum (strain LMG 29417 / CECT 9101 / MAFF 303099) (Mesorhizobium loti (strain MAFF 303099)).